The sequence spans 252 residues: 3-deoxy-manno-octulosonate cytidylyltransferase (252 aa).

The protein belongs to the KdsB family.

Its subcellular location is the cytoplasm. It carries out the reaction 3-deoxy-alpha-D-manno-oct-2-ulosonate + CTP = CMP-3-deoxy-beta-D-manno-octulosonate + diphosphate. The protein operates within nucleotide-sugar biosynthesis; CMP-3-deoxy-D-manno-octulosonate biosynthesis; CMP-3-deoxy-D-manno-octulosonate from 3-deoxy-D-manno-octulosonate and CTP: step 1/1. It participates in bacterial outer membrane biogenesis; lipopolysaccharide biosynthesis. Activates KDO (a required 8-carbon sugar) for incorporation into bacterial lipopolysaccharide in Gram-negative bacteria. The protein is 3-deoxy-manno-octulosonate cytidylyltransferase of Trichlorobacter lovleyi (strain ATCC BAA-1151 / DSM 17278 / SZ) (Geobacter lovleyi).